The sequence spans 430 residues: MSSSYLKLDFKLKNQVVPFESYQKQVSQIHNAVKSKSVEEKDWLGWLNLASDYNKEEYAKMEEKVAQWLKDKVEVVVVIGIGGSYLGAKTGYEFIFGKYSIKKPQMELVFAGNDISAETLVAKLNYVKDKKFAINVISKSGTTLEPSIAFREFRNLLEQKEVNSWEYIVATTDKQKGVLFELATAKKYTKFVIPDDVGGRFSVLTAVGLFPFLCAGIDAKKVLEGARQMNKELFSENVMENAAYKYAVARHYLHKEKKYAVEIFVSYEPKLRYFAEWWKQLFAESEGKDGKGLWPSSAIFSTDLHSLGQMIQDGPKILFETVLTLENPAYDITFKDNVIDYDKLNYLSDKKLSEVNNVAFNATMEAHSDEGNVPNISMLFKDFSEETLGALFMFFMRAVTMSAYLLGVNPFNQPGVEVYKKNMFFLLGKK.

Glutamate 284 acts as the Proton donor in catalysis. Catalysis depends on residues histidine 305 and lysine 420.

This sequence belongs to the GPI family.

The protein localises to the cytoplasm. The catalysed reaction is alpha-D-glucose 6-phosphate = beta-D-fructose 6-phosphate. It participates in carbohydrate biosynthesis; gluconeogenesis. The protein operates within carbohydrate degradation; glycolysis; D-glyceraldehyde 3-phosphate and glycerone phosphate from D-glucose: step 2/4. Its function is as follows. Catalyzes the reversible isomerization of glucose-6-phosphate to fructose-6-phosphate. This chain is Glucose-6-phosphate isomerase, found in Mycoplasmopsis synoviae (strain 53) (Mycoplasma synoviae).